Consider the following 701-residue polypeptide: Elongation factor G (701 aa).

In terms of domain architecture, tr-type G spans Ser8 to Thr290. GTP contacts are provided by residues Ala17–Thr24, Asp88–His92, and Asn142–Asp145.

This sequence belongs to the TRAFAC class translation factor GTPase superfamily. Classic translation factor GTPase family. EF-G/EF-2 subfamily.

Its subcellular location is the cytoplasm. Functionally, catalyzes the GTP-dependent ribosomal translocation step during translation elongation. During this step, the ribosome changes from the pre-translocational (PRE) to the post-translocational (POST) state as the newly formed A-site-bound peptidyl-tRNA and P-site-bound deacylated tRNA move to the P and E sites, respectively. Catalyzes the coordinated movement of the two tRNA molecules, the mRNA and conformational changes in the ribosome. The protein is Elongation factor G of Actinobacillus pleuropneumoniae serotype 5b (strain L20).